The following is a 258-amino-acid chain: 5'-nucleotidase SurE (258 aa).

A divalent metal cation contacts are provided by aspartate 8, aspartate 9, serine 40, and asparagine 98.

Belongs to the SurE nucleotidase family. It depends on a divalent metal cation as a cofactor.

Its subcellular location is the cytoplasm. It catalyses the reaction a ribonucleoside 5'-phosphate + H2O = a ribonucleoside + phosphate. Its function is as follows. Nucleotidase that shows phosphatase activity on nucleoside 5'-monophosphates. This is 5'-nucleotidase SurE from Synechococcus elongatus (strain ATCC 33912 / PCC 7942 / FACHB-805) (Anacystis nidulans R2).